The following is a 383-amino-acid chain: Mating-type protein MAT-1 (383 aa).

A DNA-binding region (alpha box) is located at residues 60-117; that stretch reads KARKALNAFVGFRCYYVTIPMFKSWPMKKLSNLIGLLWEADPNKSLWSLMAKAWSTIR.

It belongs to the MATALPHA1 family.

It localises to the nucleus. Mating type proteins are sequence specific DNA-binding proteins that act as master switches in fungal differentiation by controlling gene expression in a cell type-specific fashion. Transcriptional activator that induces the transcription of alpha-specific genes. The polypeptide is Mating-type protein MAT-1 (MAT1) (Cochliobolus heterostrophus (Southern corn leaf blight fungus)).